The sequence spans 290 residues: MFQGSMPALVTPMTNGAVDFEVLKRLVDWHVEEGSNGLVPVGTTGESPTLTHEEHEQVIETVVKAAGGRVPVIAGAGSNNTAEAMRHVQHAKDVGADATLVVTPYYNKPTQRGLIAHYEALAEVGIPIFIYNIPGRSVVDMTPETMGELAKHPMIIGVKDATADMARVSRQRETCGTDFVQMSAEDASALGFNAHGGVGCISVTANVAPKLCAEFQAAMGAGDYTEALAYQDRLMPLHNAIFTEPGLCGVKYAMSVLGLCSDEVRLPLVGVDESTKAAIEAALRHAGLLS.

A pyruvate-binding site is contributed by Thr-44. Tyr-131 serves as the catalytic Proton donor/acceptor. Lys-159 functions as the Schiff-base intermediate with substrate in the catalytic mechanism. Ile-201 is a binding site for pyruvate.

This sequence belongs to the DapA family. In terms of assembly, homotetramer; dimer of dimers.

It localises to the cytoplasm. It catalyses the reaction L-aspartate 4-semialdehyde + pyruvate = (2S,4S)-4-hydroxy-2,3,4,5-tetrahydrodipicolinate + H2O + H(+). The protein operates within amino-acid biosynthesis; L-lysine biosynthesis via DAP pathway; (S)-tetrahydrodipicolinate from L-aspartate: step 3/4. In terms of biological role, catalyzes the condensation of (S)-aspartate-beta-semialdehyde [(S)-ASA] and pyruvate to 4-hydroxy-tetrahydrodipicolinate (HTPA). This chain is 4-hydroxy-tetrahydrodipicolinate synthase, found in Jannaschia sp. (strain CCS1).